The chain runs to 806 residues: MFVSYRWLQEYVDIKDVTAQELADKITKSGIEVEGVEVLNKGVKGVVVGHVLECEKHPEADKLSKCLIDIGEEEPVQIICGAANIAKGLKVPVAKVGAVLPGNFKIKKAKLRGEASHGMVCALQELGIDGKLVSKEYADGIFIFPSDAEVGADALEILNLHDEVLELGLTPNRADCLNMLGVAYEVAAIYGREVKLPAIDLQETAEKTSDYISVSVEAKEENPLYIAKMVKNVKIGPSPMWMQTRLMAAGIRPISNVVDITNYILMEYGQPLHAFDYDKLGSKEIVVRLAKEGEKIETLDDQERTLQSHHLVITNGTKALAVAGVMGGADSEVTNETVNVLIESAYFAGQTVRRTSKDLGLRSESSARFEKGIDPTRTFEAIQHAAALMAKYAGGEALEGVVEADNLQVQERTVSVTAEKVNRVLGTNISASEMGTMFTNLKFPFTEVEGTFHVNVPARRPDITISEDLVEEVGRLYGYDHIPVTLPSGTMTRGKLTAAQTKRRKVRRFLEGAGLYEAITYSLTSADKAKQYMVEPNEKAPVNLALPMSEERSQLRLSLVPQLLEAVSYNVARKNDSVALYEVGSIFLPTEAGELPKEEQHLAGVMTGLALHHAWQGEKKVVDFFVVKGVLEGLFDVLGVSNQITYAPAKREGMHPGRTADIVLDGEVIGFIGQLHPEAEKQLDVKNTFVFELSLVKVFGTDAEETYYSAIPRFPSMTRDMAVVVTKETKAGEMKQVIAEAGGELLKDVTLFDLYEGEKMEEGKKSLAFSMNYFDPERTLTDEEVTEAHNRVLTAVEEKFGAELRK.

Residues 40–155 (NKGVKGVVVG…SDAEVGADAL (116 aa)) enclose the tRNA-binding domain. The 76-residue stretch at 409 to 484 (VQERTVSVTA…RLYGYDHIPV (76 aa)) folds into the B5 domain. Residues aspartate 462, aspartate 468, glutamate 471, and glutamate 472 each contribute to the Mg(2+) site. An FDX-ACB domain is found at 712 to 805 (PRFPSMTRDM…VEEKFGAELR (94 aa)).

Belongs to the phenylalanyl-tRNA synthetase beta subunit family. Type 1 subfamily. As to quaternary structure, tetramer of two alpha and two beta subunits. Mg(2+) is required as a cofactor.

Its subcellular location is the cytoplasm. The catalysed reaction is tRNA(Phe) + L-phenylalanine + ATP = L-phenylalanyl-tRNA(Phe) + AMP + diphosphate + H(+). The sequence is that of Phenylalanine--tRNA ligase beta subunit from Bacillus thuringiensis subsp. konkukian (strain 97-27).